The sequence spans 482 residues: Argininosuccinate synthase (482 aa).

Residues 17 to 25 (AFSGGLDTS) and Ala-43 contribute to the ATP site. Tyr-99 lines the L-citrulline pocket. ATP is bound by residues Gly-129 and Thr-131. Positions 131, 135, and 136 each coordinate L-aspartate. Asn-135 provides a ligand contact to L-citrulline. Asp-136 is a binding site for ATP. Residues Arg-139 and Ser-192 each contribute to the L-citrulline site. Asp-194 provides a ligand contact to ATP. L-citrulline contacts are provided by Thr-201, Glu-203, and Glu-280. A disordered region spans residues 461 to 482 (SRGEATDEETMLDRAAMESGTD).

This sequence belongs to the argininosuccinate synthase family. Type 2 subfamily. As to quaternary structure, homotetramer.

Its subcellular location is the cytoplasm. The catalysed reaction is L-citrulline + L-aspartate + ATP = 2-(N(omega)-L-arginino)succinate + AMP + diphosphate + H(+). It participates in amino-acid biosynthesis; L-arginine biosynthesis; L-arginine from L-ornithine and carbamoyl phosphate: step 2/3. This Streptomyces lavendulae protein is Argininosuccinate synthase (argG).